Here is a 65-residue protein sequence, read N- to C-terminus: Muscarinic toxin-like protein 3 (65 aa).

Cystine bridges form between Cys3-Cys24, Cys17-Cys41, Cys45-Cys57, and Cys58-Cys63.

As to quaternary structure, homodimer; non-covalently linked. As to expression, expressed by the venom gland.

Its subcellular location is the secreted. In terms of biological role, antagonist of muscle and neuronal nicotinic acetylcholine receptors (nAChR) with highest affinity for neuronal alpha-7/CHRNA7 nAChRs. The sequence is that of Muscarinic toxin-like protein 3 from Naja kaouthia (Monocled cobra).